The chain runs to 704 residues: Elongation factor G (704 aa).

Residues 10-290 (TKVRNIGIMA…AVVDYLPSPL (281 aa)) form the tr-type G domain. GTP-binding positions include 19-26 (AHIDAGKT), 83-87 (DTPGH), and 137-140 (NKMD).

This sequence belongs to the TRAFAC class translation factor GTPase superfamily. Classic translation factor GTPase family. EF-G/EF-2 subfamily.

It localises to the cytoplasm. Its function is as follows. Catalyzes the GTP-dependent ribosomal translocation step during translation elongation. During this step, the ribosome changes from the pre-translocational (PRE) to the post-translocational (POST) state as the newly formed A-site-bound peptidyl-tRNA and P-site-bound deacylated tRNA move to the P and E sites, respectively. Catalyzes the coordinated movement of the two tRNA molecules, the mRNA and conformational changes in the ribosome. The sequence is that of Elongation factor G from Beutenbergia cavernae (strain ATCC BAA-8 / DSM 12333 / CCUG 43141 / JCM 11478 / NBRC 16432 / NCIMB 13614 / HKI 0122).